The chain runs to 1481 residues: Cystic fibrosis transmembrane conductance regulator (1481 aa).

At 1 to 77 (MQRSPLEKAS…KLINALRRCF (77 aa)) the chain is on the cytoplasmic side. The chain crosses the membrane as a helical span at residues 78 to 98 (FWRFMFYGIILYLGEVTKAVQ). One can recognise an ABC transmembrane type-1 1 domain in the interval 81–365 (FMFYGIILYL…WAVQTWYDSL (285 aa)). Residues 99-122 (PLLLGRIIASYDPDNKVERSIAIY) lie on the Extracellular side of the membrane. Residues 123–146 (LGIGLCLLFIVRTLLLHPAIFGLH) traverse the membrane as a helical segment. Residues 147 to 195 (HIGMQMRIAMFSLIYKKTLKLSSRVLDKISIGQLVSLLSNNLNKFDEGL) lie on the Cytoplasmic side of the membrane. A helical membrane pass occupies residues 196–216 (ALAHFVWIAPLQVTLLMGLLW). The Extracellular portion of the chain corresponds to 217–222 (ELLQAF). Residues 223-243 (TFCGLAFLIVLALLQAGLGKM) traverse the membrane as a helical segment. Over 244 to 298 (MMKYRDQRAGKINERLVITSEMIENIQSVKAYCWEEAMEKIIENLRQTELKLTRK) the chain is Cytoplasmic. Residues 299–319 (AAYVRYLNSSAFFFSGFFVVF) traverse the membrane as a helical segment. Topologically, residues 320–339 (LSVLPYALLKGIILRKIFTT) are extracellular. The helical transmembrane segment at 340–358 (ISFCIVLRMAVTRQFPWAV) threads the bilayer. Residues 359 to 858 (QTWYDSLGAI…YLRYITVHKS (500 aa)) lie on the Cytoplasmic side of the membrane. Residues Trp-401, 457–464 (GSTGAGKT), and Gln-492 contribute to the ATP site. Residues 423-645 (NGDNSLFFSN…RPDFSSKLMG (223 aa)) enclose the ABC transporter 1 domain. Cys-523 is lipidated: S-palmitoyl cysteine. The residue at position 548 (Ser-548) is a Phosphoserine. Positions 653–831 (TAERRNSIIT…EEINEEDLRD (179 aa)) are disordered R region. 2 positions are modified to phosphoserine; by PKA: Ser-659 and Ser-669. Residue Ser-685 is modified to Phosphoserine; by PKC. Lys-687 is covalently cross-linked (Glycyl lysine isopeptide (Lys-Gly) (interchain with G-Cter in ubiquitin)). Position 699 is a phosphoserine; by PKA (Ser-699). A Phosphoserine modification is found at Ser-711. Thr-716 carries the phosphothreonine modification. A phosphoserine; by PKA mark is found at Ser-736 and Ser-767. Position 790 is a phosphoserine; by PKC (Ser-790). Residues Ser-795 and Ser-813 each carry the phosphoserine; by PKA modification. Residues 859 to 879 (LMFVLIWCLVVFLVEVAASLV) form a helical membrane-spanning segment. In terms of domain architecture, ABC transmembrane type-1 2 spans 859–1155 (LMFVLIWCLV…AVNSSIDVDS (297 aa)). The Extracellular segment spans residues 880-918 (VLCLFPKIFFQDKGNSTKSANNSYAVIITSTSSYYIFYI). 2 N-linked (GlcNAc...) asparagine glycosylation sites follow: Asn-894 and Asn-900. Residues 919-939 (YVGVADTLLALGLFRGLPLVH) traverse the membrane as a discontinuously helical segment. Residues 940–990 (TLITVSKTLHHKMLQSVLQAPMSTLNTLKTGGILNRFSKDIAVLDDLLPLT) are Cytoplasmic-facing. A helical transmembrane segment spans residues 991–1011 (IFDFVQLLLIVIGAVVVVSVL). Residues 1012-1013 (QP) are Extracellular-facing. The helical transmembrane segment at 1014 to 1034 (YIFLATVPVIAAFILLRAYFL) threads the bilayer. Residues 1035-1095 (HTSQQLKQLE…TANWFLYLST (61 aa)) are Cytoplasmic-facing. Residues 1096 to 1116 (LRWFQMRIEMIFVIFFIAVTF) traverse the membrane as a helical segment. Residues 1117–1130 (ISILTTGEGEGRVG) lie on the Extracellular side of the membrane. The helical transmembrane segment at 1131–1151 (IILTLAMNIMGTLQWAVNSSI) threads the bilayer. Residues 1152–1481 (DVDSLMRSVS…TEEEVQETKL (330 aa)) lie on the Cytoplasmic side of the membrane. The ABC transporter 2 domain maps to 1211–1444 (MTVKDLTAKY…KSLFRQAISP (234 aa)). Residues Tyr-1220 and 1245–1252 (GRTGSGKS) each bind ATP. Positions 1387–1481 (RTLKQAFANC…TEEEVQETKL (95 aa)) are interaction with GORASP2. Cys-1396 carries S-palmitoyl cysteine lipidation. The disordered stretch occupies residues 1453–1481 (HRNSSRQRSRSNIAALKEETEEEVQETKL). Residue Ser-1457 is modified to Phosphoserine. Positions 1471 to 1481 (ETEEEVQETKL) are enriched in acidic residues. Residues 1479 to 1481 (TKL) carry the PDZ-binding motif.

Belongs to the ABC transporter superfamily. ABCC family. CFTR transporter (TC 3.A.1.202) subfamily. In terms of assembly, monomer; does not require oligomerization for channel activity. May form oligomers in the membrane. Interacts with SLC26A3, SLC26A6 and NHERF1. Interacts with SHANK2. Interacts with MYO6. Interacts (via C-terminus) with GOPC (via PDZ domain); this promotes CFTR internalization and thereby decreases channel activity. Interacts with SLC4A7 through NHERF1. Found in a complex with MYO5B and RAB11A. Interacts with ANO1. Interacts with SLC26A8. Interacts with AHCYL1; the interaction increases CFTR activity. Interacts with CSE1L. The core-glycosylated form interacts with GORASP2 (via PDZ GRASP-type 1 domain) in respone to ER stress. Interacts with MARCHF2; the interaction leads to CFTR ubiqtuitination and degradation. Interacts with ADGRG2. N-glycosylated. In terms of processing, phosphorylated; cAMP treatment promotes phosphorylation and activates the channel. Dephosphorylation decreases the ATPase activity (in vitro). Phosphorylation at PKA sites activates the channel. Phosphorylation at PKC sites enhances the response to phosphorylation by PKA. Phosphorylated by AMPK; this inhibits channel activity. Post-translationally, ubiquitinated, leading to its degradation in the lysosome. Deubiquitination by USP10 in early endosomes enhances its endocytic recycling to the cell membrane. Ubiquitinated by RNF185 during ER stress. Ubiquitinated by MARCHF2.

Its subcellular location is the apical cell membrane. The protein resides in the early endosome membrane. The protein localises to the cell membrane. It localises to the recycling endosome membrane. It is found in the endoplasmic reticulum membrane. Its subcellular location is the nucleus. It carries out the reaction ATP + H2O + closed Cl(-) channel = ADP + phosphate + open Cl(-) channel.. The enzyme catalyses chloride(in) = chloride(out). It catalyses the reaction hydrogencarbonate(in) = hydrogencarbonate(out). The catalysed reaction is ATP + H2O = ADP + phosphate + H(+). Functionally, epithelial ion channel that plays an important role in the regulation of epithelial ion and water transport and fluid homeostasis. Mediates the transport of chloride ions across the cell membrane. Possesses an intrinsic ATPase activity and utilizes ATP to gate its channel; the passive flow of anions through the channel is gated by cycles of ATP binding and hydrolysis by the ATP-binding domains. The ion channel is also permeable to HCO(3)(-); selectivity depends on the extracellular chloride concentration. Exerts its function also by modulating the activity of other ion channels and transporters. Contributes to the regulation of the pH and the ion content of the epithelial fluid layer. Modulates the activity of the epithelial sodium channel (ENaC) complex, in part by regulating the cell surface expression of the ENaC complex. May regulate bicarbonate secretion and salvage in epithelial cells by regulating the transporter SLC4A7. Can inhibit the chloride channel activity of ANO1. Plays a role in the chloride and bicarbonate homeostasis during sperm epididymal maturation and capacitation. This is Cystic fibrosis transmembrane conductance regulator from Bos taurus (Bovine).